The primary structure comprises 340 residues: Zinc finger protein 367 (340 aa).

Residues 96 to 140 (LPTLRGAPPSSASVAAVSGGEDEEEASSPDSGHLKDGIRRGRPRA) form a disordered region. Low complexity predominate over residues 101–114 (GAPPSSASVAAVSG). A compositionally biased stretch (basic and acidic residues) spans 127–140 (GHLKDGIRRGRPRA). C2H2-type zinc fingers lie at residues 157 to 179 (IRCN…KRTH) and 185 to 209 (YLCD…QRLH). The segment at 280-317 (KGKLVQKADQEQQDPLEYLQSDEEDDEKSGAQRRLQEQ) is disordered. A coiled-coil region spans residues 299–332 (QSDEEDDEKSGAQRRLQEQRERLHGALALIELAN). The residue at position 300 (Ser-300) is a Phosphoserine. Basic and acidic residues predominate over residues 307-317 (KSGAQRRLQEQ).

The protein belongs to the krueppel C2H2-type zinc-finger protein family.

The protein resides in the nucleus. Functionally, transcriptional activator. May be involved in transcriptional activation of erythroid genes. The chain is Zinc finger protein 367 (Znf367) from Rattus norvegicus (Rat).